The following is a 1138-amino-acid chain: Envelopment polyprotein (1138 aa).

Residues 1-18 form the signal peptide; the sequence is MEGWYLVVLGVCYTLTLA. Residues 19-487 are Lumenal-facing; that stretch reads MPKTIYELKM…CVPGLHGWAT (469 aa). Cystine bridges form between C30/C155, C64/C161, C113/C132, C137/C142, C179/C189, C214/C250, C239/C354, C379/C438, C383/C392, C408/C427, and C455/C478. N138 carries N-linked (GlcNAc...) asparagine; by host glycosylation. N-linked (GlcNAc...) asparagine; by host glycosylation occurs at N350. N-linked (GlcNAc...) asparagine; by host glycosylation occurs at N402. A helical transmembrane segment spans residues 488–508; that stretch reads VMLLSTFCFGWVLIPAVTLII. Residues 509–630 are Cytoplasmic-facing; sequence LKCLRVLTFS…LGVFRYKSRC (122 aa). The segment at 519–536 is binding to the ribonucleoprotein; the sequence is CSHYTNESKFKFILEKVK. 2 consecutive CCHC-type zinc fingers follow at residues 548–568 and 573–594; these read CDVC…RQSC and CPYC…YSIC. 3 binding to the ribonucleoprotein regions span residues 591-608, 595-606, and 614-628; these read YSIC…KKSL, KLTGRFQEALKK, and KKGC…RYKS. The segment at 610 to 637 is interaction with host TRAF3; sequence KPEVKKGCYRTLGVFRYKSRCYVGLVWC. In terms of domain architecture, ITAM spans 614 to 637; the sequence is KKGCYRTLGVFRYKSRCYVGLVWC. Phosphotyrosine is present on residues Y618 and Y631. The YxxL signature appears at 618–621; it reads YRTL. The chain crosses the membrane as a helical span at residues 631-651; the sequence is YVGLVWCLLLTCEIVIWAASA. Residues 652 to 1107 lie on the Lumenal side of the membrane; the sequence is ETPLMESGWS…EWLLGILNGN (456 aa). 8 disulfide bridges follow: C738-C773, C742-C780, C754-C887, C768-C898, C783-C906, C809-C818, C826-C835, and C866-C870. The tract at residues 760-780 is fusion loop; it reads YQYETGWGCNPGDCPGVGTGC. N930 carries an N-linked (GlcNAc...) asparagine; by host glycan. Disulfide bonds link C972-C1002, C995-C1047, C1012-C1017, C1048-C1053, and C1087-C1091. A helical membrane pass occupies residues 1108–1128; the sequence is WIVVVVLVVILILSIIMFSVL. The tract at residues 1124–1138 is binding to the ribonucleoprotein; sequence MFSVLCPRRGHKKTV. At 1129-1138 the chain is on the cytoplasmic side; that stretch reads CPRRGHKKTV.

The protein belongs to the hantavirus envelope glycoprotein family. Homodimer. Homotetramer; forms heterotetrameric Gn-Gc spikes in the pre-fusion conformation. Interacts (via C-terminus) with the nucleoprotein. Interacts with host TUFM; this interaction contributes to the virus-induced degradation of mitochondria by autophagy, which leads to degradation of host MAVS and inhibition of type I interferon (IFN) responses. Interacts with host MAP1LC3B; this interaction contributes to the virus-induced degradation of mitochondria by autophagy, which leads to degradation of host MAVS and inhibition of type I interferon (IFN) responses. Interacts (via C-terminus) with host TRAF3; this interaction inhibits the formation of TRAF3-TBK1 complexes. In terms of assembly, homodimer. Homotetramer; forms heterotetrameric Gn-Gc spikes in the pre-fusion conformation. Homotrimer; forms homotrimer in the post-fusion conformation at acidic pH. Interacts (via C-terminus) with the nucleoprotein. Post-translationally, envelope polyprotein precursor is quickly cleaved in vivo just after synthesis, presumably by host signal peptidase.

Its subcellular location is the virion membrane. The protein localises to the host cell surface. It is found in the host Golgi apparatus membrane. It localises to the host endoplasmic reticulum membrane. The protein resides in the host mitochondrion. Functionally, forms homotetramers with glycoprotein C at the surface of the virion. Attaches the virion to host cell receptors including integrin ITGAV/ITGB3. This attachment induces virion internalization possibly through clathrin-dependent endocytosis and dynamin-independent macropinocytosis. Mediates the assembly and budding of infectious virus particles through its interaction with the nucleocapsid protein and the viral genome. May dysregulate normal immune and endothelial cell responses through an ITAM motif. Translocates to mitochondria, binds to host TUFM and recruits MAP1LC3B. These interactions induce mitochondrial autophagy and therefore destruction of host MAVS leading to inhibition of type I interferon (IFN) responses. Concomitant breakdown of glycoprotein N is apparently prevented by the nucleoprotein that may inhibit Gn-stimulated autophagosome-lysosome fusion. Interacts with the viral genomic RNA. Inhibits the host RIG-I/TBK1 pathway by disrupting the formation of TBK1-TRAF3 complexes and downstream signaling responses required for IFN-beta transcription. Its function is as follows. Forms homotetramers with glycoprotein N at the surface of the virion. Attaches the virion to host cell receptors including integrin ITGAV/ITGB3. This attachment induces virion internalization predominantly through clathrin-dependent endocytosis. Class II fusion protein that promotes fusion of viral membrane with host endosomal membrane after endocytosis of the virion. This is Envelopment polyprotein (GP) from Abrothrix longipilis (Long-haired grass mouse).